We begin with the raw amino-acid sequence, 452 residues long: Tubulin alpha-8 chain (452 aa).

Positions 15, 74, 143, 147, 148, 182, 209, and 231 each coordinate GTP. Residue glutamate 74 participates in Mg(2+) binding. Glutamate 257 is an active-site residue.

The protein belongs to the tubulin family. As to quaternary structure, dimer of alpha and beta chains. A typical microtubule is a hollow water-filled tube with an outer diameter of 25 nm and an inner diameter of 15 nM. Alpha-beta heterodimers associate head-to-tail to form protofilaments running lengthwise along the microtubule wall with the beta-tubulin subunit facing the microtubule plus end conferring a structural polarity. Microtubules usually have 13 protofilaments but different protofilament numbers can be found in some organisms and specialized cells. Requires Mg(2+) as cofactor.

Its subcellular location is the cytoplasm. The protein resides in the cytoskeleton. It carries out the reaction GTP + H2O = GDP + phosphate + H(+). Its function is as follows. Tubulin is the major constituent of microtubules, a cylinder consisting of laterally associated linear protofilaments composed of alpha- and beta-tubulin heterodimers. Microtubules grow by the addition of GTP-tubulin dimers to the microtubule end, where a stabilizing cap forms. Below the cap, tubulin dimers are in GDP-bound state, owing to GTPase activity of alpha-tubulin. The sequence is that of Tubulin alpha-8 chain (tba-8) from Caenorhabditis elegans.